The primary structure comprises 915 residues: WD repeat-containing protein 44 (915 aa).

Residues 1 to 14 (MASESDTEEFYDAP) are compositionally biased toward acidic residues. The interval 1–24 (MASESDTEEFYDAPEDVHLGTGYP) is disordered. Alanine 2 is modified (N-acetylalanine). The tract at residues 2–173 (ASESDTEEFY…SSGEQLDASG (172 aa)) is binding activity. Serine 3 bears the Phosphoserine mark. The short motif at 9–15 (EFYDAPE) is the FFAT-like motif element. The residue at position 11 (tyrosine 11) is a Phosphotyrosine. 6 positions are modified to phosphoserine: serine 27, serine 50, serine 66, serine 71, serine 81, and serine 126. Disordered stretches follow at residues 79-102 (DDSLDSKGKGLSDEATAGPSVAGT), 117-174 (LQQD…ASGL), and 208-282 (VEEV…PKEN). Residues 114–139 (EHELQQDSEKAESQNVAEESELETQK) are a coiled coil. Basic and acidic residues predominate over residues 146-155 (TCEKSEKTVD). Residues threonine 161 and threonine 221 each carry the phosphothreonine modification. The segment at 213-259 (PAKPPRHLTPEPDIVASTKKPVPARPPPPTNFPPPRPPPPSRPAPPP) is important for interaction with ARHGAP26 AND ARHGAP10. Residues 235 to 258 (PARPPPPTNFPPPRPPPPSRPAPP) show a composition bias toward pro residues. Phosphoserine is present on serine 264. Basic and acidic residues predominate over residues 264–280 (SELEFEALKTPDLDVPK). Threonine 273 is modified (phosphothreonine). The interval 336 to 349 (VMGPQRPRSNSGRE) is important for interaction with RAB11A. Serine 344 and serine 346 each carry phosphoserine. 2 positions are modified to phosphothreonine: threonine 351 and threonine 403. Disordered regions lie at residues 399–425 (SNDATQSDDEEKLQSQQTDTDGGRLKQ) and 461–481 (DEVFHTDQDDPSSSDDEGMPY). A phosphoserine mark is found at serine 405, serine 472, serine 473, and serine 474. The segment covering 469–478 (DDPSSSDDEG) has biased composition (acidic residues). Tyrosine 481 bears the Phosphotyrosine mark. A WD 1 repeat occupies 511-550 (EHMGAVWTMKFSHCGRLLASAGQDNIVRIWALKNAFDYFN). The tract at residues 559–593 (EGRVSPSPSQESLSSSKSDTDMGVCSGTDEDPDDK) is disordered. Phosphoserine occurs at positions 563 and 567. Over residues 563–575 (SPSPSQESLSSSK) the composition is skewed to low complexity. 7 WD repeats span residues 607-645 (GHTADLLDLSWSKNYFLLSSSMDKTVRLWHISRRECLCC), 647-687 (QHID…VALW), 692-731 (GQTKLITAANFCQNGKYAVIGTYDGRCIFYDTEHLKYHTQ), 742-781 (KVGRKITGIEPLPGENKILVTSNDSRIRLYDLRDLSLSMK), 786-825 (VNSSSQIKASFSHDFTYLVSGSEDKYVYIWSTYHDLSKFT), 840-880 (AHNA…EVLD), and 882-915 (TSTGIVKTDNTEVLLSADFTGAIKVFINKRKTVS).

Interacts with the GTP-bound form of RAB11 when membrane-associated. Interacts with GRAF1/ARHGAP26 or GRAF2/ARHGAP10; the interaction connects the endoplasmic reticulum (ER) with the endosomal tubule. Interacts (via FFAT-like motif) with VAPA (via MSP domain) or VAPB (via MSP domain); the interaction connects the ER with the endosomal tubule. Does not bind to other Rab and Rho small G proteins. Post-translationally, phosphorylated by ATK1; the phosphorylation stabilizes its interaction with RAB11A and RAB11B.

The protein resides in the cytoplasm. Its subcellular location is the cytosol. It localises to the perinuclear region. The protein localises to the endosome membrane. It is found in the golgi apparatus. The protein resides in the trans-Golgi network. In terms of biological role, downstream effector for Rab11 which regulates Rab11 intracellular membrane trafficking functions such as endocytic recycling, intracellular ciliogenesis and protein export. ATK1-mediated phosphorylation of WDR44 induces binding to Rab11 which activates endocytic recycling of transferrin receptor back to the plasma membrane. When bound to Rab11, prevents the formation of the ciliogenic Rab11-Rabin8/RAB3IP-RAB11FIP3 complex, therefore inhibiting preciliary trafficking and ciliogenesis. Participates in neo-synthesized protein export by connecting the endoplasmic reticulum (ER) with the endosomal tubule via direct interactions with the integral ER proteins VAPA or VAPB and the endosomal protein GRAFs (GRAF1/ARHGAP26 or GRAF2/ARHGAP10), which facilitates the transfer of proteins such as E-cadherin, MPP14 and CFTR into a Rab8-Rab10-Rab11-dependent export route. The sequence is that of WD repeat-containing protein 44 from Mus musculus (Mouse).